Consider the following 297-residue polypeptide: Leucine-rich repeat-containing protein 25 (297 aa).

The first 25 residues, 1 to 25 (MGSIRTRLLWLCLLMLLALLHKSGS), serve as a signal peptide directing secretion. Residues 26-169 (QDLTCMVHPS…SCPPSWGPGT (144 aa)) lie on the Extracellular side of the membrane. 2 N-linked (GlcNAc...) asparagine glycosylation sites follow: asparagine 44 and asparagine 49. 2 LRR repeats span residues 66–89 (HAQVLDLSKNGLQVLPGAFFDKLE) and 90–113 (KLQTLIVTHNQLDSVDRSLALRCD). N-linked (GlcNAc...) asparagine glycosylation is found at asparagine 133 and asparagine 152. The helical transmembrane segment at 170 to 190 (IGALVAGTISLAVAVSGSVLA) threads the bilayer. The Cytoplasmic portion of the chain corresponds to 191–297 (WRLLRRRRRA…VYCNLESLGR (107 aa)). Residues 202–244 (EHSLSKAQMSPHDIPKPVTDFLPRYSSRRPGPKAPDSPPSRFT) are disordered. 3 positions are modified to phosphoserine: serine 211, serine 238, and serine 267. At tyrosine 289 the chain carries Phosphotyrosine.

In terms of assembly, interacts with RIGI. Interacts with SQSTM1. Interacts with p65/RELA; this interaction promotes the degradation of RELA through autophagy.

The protein resides in the membrane. It is found in the cytoplasm. Its function is as follows. Plays a role in the inhibition of RLR-mediated type I interferon signaling pathway by targeting RIGI for autophagic degradation. Interacts specifically with ISG15-associated RIGI to promote interaction between RIGI and the autophagic cargo receptor p62/SQSTM1 to mediate RIGI degradation via selective autophagy. Plays also a role in the inhibition of NF-kappa-B signaling pathway and inflammatory response by promoting the degradation of p65/RELA. This chain is Leucine-rich repeat-containing protein 25 (Lrrc25), found in Mus musculus (Mouse).